Consider the following 406-residue polypeptide: Biofilm regulatory protein A (406 aa).

The signal sequence occupies residues 1–26 (MKIGKKILIMLVTIFLTSLVALGVYA). Over residues 347 to 397 (SSSASDYSSSGNYSGSSSDYGSSSSYGSNSSSGSSSDYSGQNSYNQGNYQQ) the composition is skewed to low complexity. Residues 347–406 (SSSASDYSSSGNYSGSSSDYGSSSSYGSNSSSGSSSDYSGQNSYNQGNYQQPAAGTGIGN) are disordered.

This sequence belongs to the LytR/CpsA/Psr (LCP) family.

The protein localises to the cell envelope. Involved in biofilm formation, cell division, autolysis and the regulation of acid and oxidative stress tolerance. May be associated with systemic virulence in blood. This chain is Biofilm regulatory protein A (brpA), found in Streptococcus mutans serotype c (strain ATCC 700610 / UA159).